The following is a 701-amino-acid chain: UvrABC system protein B (701 aa).

A Helicase ATP-binding domain is found at 35-422 (RRIQGGAADT…GGDVVEQVIR (388 aa)). An ATP-binding site is contributed by 48–55 (GATGTGKT). The short motif at 101–124 (YYDYYQPEAYVPQTDTYIEKDSSI) is the Beta-hairpin element. One can recognise a Helicase C-terminal domain in the interval 439–605 (QIDDLVHEIR…PLRKKIADIL (167 aa)). Residues 620-648 (ARSRGEKRGTPTPRSGALSGPDRVAEQAK) are disordered. One can recognise a UVR domain in the interval 656–691 (AALVEQLTEQMHQAAADLQFELAARLRDEIKELKRE).

The protein belongs to the UvrB family. Forms a heterotetramer with UvrA during the search for lesions. Interacts with UvrC in an incision complex.

It localises to the cytoplasm. The UvrABC repair system catalyzes the recognition and processing of DNA lesions. A damage recognition complex composed of 2 UvrA and 2 UvrB subunits scans DNA for abnormalities. Upon binding of the UvrA(2)B(2) complex to a putative damaged site, the DNA wraps around one UvrB monomer. DNA wrap is dependent on ATP binding by UvrB and probably causes local melting of the DNA helix, facilitating insertion of UvrB beta-hairpin between the DNA strands. Then UvrB probes one DNA strand for the presence of a lesion. If a lesion is found the UvrA subunits dissociate and the UvrB-DNA preincision complex is formed. This complex is subsequently bound by UvrC and the second UvrB is released. If no lesion is found, the DNA wraps around the other UvrB subunit that will check the other stand for damage. This chain is UvrABC system protein B, found in Thermobifida fusca (strain YX).